A 93-amino-acid polypeptide reads, in one-letter code: Large ribosomal subunit protein bL31 (93 aa).

Residues 68–93 (GSADAAADEKKPDAKNNNKDNTSKED) form a disordered region. Positions 74-93 (ADEKKPDAKNNNKDNTSKED) are enriched in basic and acidic residues.

Belongs to the bacterial ribosomal protein bL31 family. Type A subfamily. In terms of assembly, part of the 50S ribosomal subunit.

Its function is as follows. Binds the 23S rRNA. This is Large ribosomal subunit protein bL31 from Prochlorococcus marinus (strain MIT 9313).